Reading from the N-terminus, the 723-residue chain is Pescadillo homolog (723 aa).

One can recognise a BRCT domain in the interval glutamate 380–proline 497. Disordered regions lie at residues arginine 440–glycine 471 and leucine 501–lysine 723. Residues leucine 522–glutamate 551 are a coiled coil. Acidic residues-rich tracts occupy residues alanine 537–glutamate 550, methionine 588–aspartate 600, and phenylalanine 608–glutamate 622. Basic and acidic residues-rich tracts occupy residues glutamate 623 to glutamate 634, lysine 670 to lysine 681, and lysine 700 to leucine 709. Residues lysine 656–lysine 723 are a coiled coil. Positions arginine 710–lysine 723 are enriched in basic residues.

The protein belongs to the pescadillo family. As to quaternary structure, component of the NOP7 complex, composed of ERB1, NOP7 and YTM1. The complex is held together by ERB1, which interacts with NOP7 via its N-terminal domain and with YTM1 via a high-affinity interaction between the seven-bladed beta-propeller domains of the 2 proteins. The NOP7 complex associates with the 66S pre-ribosome.

It is found in the nucleus. The protein resides in the nucleolus. It localises to the nucleoplasm. Component of the NOP7 complex, which is required for maturation of the 25S and 5.8S ribosomal RNAs and formation of the 60S ribosome. The protein is Pescadillo homolog of Ajellomyces capsulatus (strain NAm1 / WU24) (Darling's disease fungus).